The sequence spans 680 residues: Enzymatic polyprotein (680 aa).

Residues 41-131 (LHCFVDTGAS…LYEPFIQFTD (91 aa)) are protease. Asp-46 is a catalytic residue. One can recognise a Reverse transcriptase domain in the interval 273 to 453 (LKVIKPSKSP…KKINFLGLEI (181 aa)).

The protein belongs to the caulimoviridae enzymatic polyprotein family.

The enzyme catalyses DNA(n) + a 2'-deoxyribonucleoside 5'-triphosphate = DNA(n+1) + diphosphate. Its function is as follows. Encodes for at least two polypeptides: protease (PR) and reverse transcriptase (RT). The protease processes the polyprotein in cis. Reverse transcriptase is multifunctional enzyme that converts the viral RNA genome into dsDNA in viral cytoplasmic capsids. This enzyme displays a DNA polymerase activity that can copy either DNA or RNA templates, and a ribonuclease H (RNase H) activity that cleaves the RNA strand of RNA-DNA heteroduplexes in a partially processive 3'- to 5'-endonucleasic mode. Neo-synthesized pregenomic RNA (pgRNA) are encapsidated, and reverse-transcribed inside the nucleocapsid. Partial (+)DNA is synthesized from the (-)DNA template and generates the relaxed circular DNA (RC-DNA) genome. After budding and infection, the RC-DNA migrates in the nucleus, and is converted into a plasmid-like covalently closed circular DNA (cccDNA). In Cauliflower mosaic virus (strain NY8153) (CaMV), this protein is Enzymatic polyprotein.